A 572-amino-acid polypeptide reads, in one-letter code: Proline--tRNA ligase (572 aa).

The protein belongs to the class-II aminoacyl-tRNA synthetase family. ProS type 1 subfamily. As to quaternary structure, homodimer.

The protein localises to the cytoplasm. It carries out the reaction tRNA(Pro) + L-proline + ATP = L-prolyl-tRNA(Pro) + AMP + diphosphate. Catalyzes the attachment of proline to tRNA(Pro) in a two-step reaction: proline is first activated by ATP to form Pro-AMP and then transferred to the acceptor end of tRNA(Pro). As ProRS can inadvertently accommodate and process non-cognate amino acids such as alanine and cysteine, to avoid such errors it has two additional distinct editing activities against alanine. One activity is designated as 'pretransfer' editing and involves the tRNA(Pro)-independent hydrolysis of activated Ala-AMP. The other activity is designated 'posttransfer' editing and involves deacylation of mischarged Ala-tRNA(Pro). The misacylated Cys-tRNA(Pro) is not edited by ProRS. In Pectobacterium carotovorum subsp. carotovorum (strain PC1), this protein is Proline--tRNA ligase.